We begin with the raw amino-acid sequence, 935 residues long: Ribonuclease E (935 aa).

One can recognise an S1 motif domain in the interval Ala-39–Phe-119. The Mg(2+) site is built by Asp-302 and Asp-345. 2 residues coordinate Zn(2+): Cys-403 and Cys-406. Residues Cys-403 to Cys-406 form a required for zinc-mediated homotetramerization and catalytic activity region. Disordered stretches follow at residues Thr-571 to Lys-669 and Val-698 to Met-743. 2 stretches are compositionally biased toward basic and acidic residues: residues Arg-593–Gln-625 and Asn-701–Arg-719. Positions Arg-720–Arg-734 are enriched in basic residues.

It belongs to the RNase E/G family. RNase E subfamily. In terms of assembly, component of the RNA degradosome, which is a multiprotein complex involved in RNA processing and mRNA degradation. Within the RNA degradosome, RNase E assembles into a homotetramer formed by a dimer of dimers. Requires Zn(2+) as cofactor. Mg(2+) is required as a cofactor.

Its subcellular location is the cytoplasm. The protein resides in the cell inner membrane. It carries out the reaction Endonucleolytic cleavage of single-stranded RNA in A- and U-rich regions.. Its function is as follows. Endoribonuclease that plays a central role in RNA processing and decay. Required for the maturation of 5S and 16S rRNAs and the majority of tRNAs. Also involved in the degradation of most mRNAs. This chain is Ribonuclease E, found in Haemophilus influenzae (strain ATCC 51907 / DSM 11121 / KW20 / Rd).